Here is a 249-residue protein sequence, read N- to C-terminus: Bax inhibitor 1 (249 aa).

The next 6 helical transmembrane spans lie at 39–59 (LVYL…YLHV), 65–85 (GMLT…VPVF), 93–113 (ILLA…KLAV), 119–139 (ILVT…CAAI), 151–171 (GLLS…SIFG), and 213–233 (HALT…VIML).

Belongs to the BI1 family. In terms of tissue distribution, ubiquitous.

The protein resides in the membrane. Functionally, suppressor of apoptosis. The protein is Bax inhibitor 1 (BI1) of Oryza sativa subsp. japonica (Rice).